The primary structure comprises 148 residues: Universal stress protein YxiE (148 aa).

Residues 1 to 18 (MFNKMLVAIDGSDMSAKA) form the signal peptide.

The protein belongs to the universal stress protein A family.

In Bacillus subtilis (strain 168), this protein is Universal stress protein YxiE (yxiE).